We begin with the raw amino-acid sequence, 140 residues long: uncharacterized protein (140 aa).

The N-acetyltransferase domain occupies 2 to 140; the sequence is KAVIAKNEEQ…GIPHLQMMKD (139 aa).

Belongs to the acetyltransferase family.

This is an uncharacterized protein from Bacillus subtilis (strain 168).